A 360-amino-acid polypeptide reads, in one-letter code: DNA ADP-ribosyl glycohydrolase (360 aa).

A Macro domain is found at 1–155; the sequence is MLRFVRGNLL…VYEPVENPKA (155 aa). Residues 8–9, 20–22, 31–34, and Thr-79 each bind ADP-D-ribose; these read NL, TVN, and VALQ. The Nucleophile role is filled by Lys-80. 117–121 contributes to the ADP-D-ribose binding site; that stretch reads GAGNG. The segment at 167 to 338 is interaction with DarT; it reads LTPARAALLK…VALDALLKRG (172 aa).

Belongs to the DarG ADP-ribosyl glycohydrolase family. Interacts (via C-terminus) with cognate toxin DarT; this heterodimeric complex neutralizes the toxic effect of DarT by preventing ssDNA binding to DarT and consequently inactivating the toxin by direct protein-protein interactions.

It carries out the reaction an N-(ADP-alpha-D-ribosyl)-thymidine in DNA + H2O = a thymidine in DNA + ADP-D-ribose. Antitoxin component of the hybrid type II/IV toxin-antitoxin (TA) system DarTG, which plays a crucial role in controlling bacterial growth and bacteriophage infection. De-ADP-ribosylates DNA modified on thymidine by its cognate toxin DarT, which neutralizes the activity of cognate toxin DarT. Upon expression in E.coli neutralizes the effect of cognate toxin DarT. Upon expression in M.tuberculosis neutralizes the toxic effects of endogenous DarT. This is DNA ADP-ribosyl glycohydrolase from Thermus aquaticus (strain ATCC BAA-2747 / Y51MC23).